The following is a 236-amino-acid chain: Small ribosomal subunit protein uS2c (236 aa).

This sequence belongs to the universal ribosomal protein uS2 family.

The protein localises to the plastid. It localises to the chloroplast. The polypeptide is Small ribosomal subunit protein uS2c (rps2) (Manihot esculenta (Cassava)).